Consider the following 113-residue polypeptide: Large ribosomal subunit protein bL19 (113 aa).

Belongs to the bacterial ribosomal protein bL19 family.

Functionally, this protein is located at the 30S-50S ribosomal subunit interface and may play a role in the structure and function of the aminoacyl-tRNA binding site. The chain is Large ribosomal subunit protein bL19 from Mycobacterium marinum (strain ATCC BAA-535 / M).